The chain runs to 1792 residues: uncharacterized protein (1792 aa).

Residues 1-28 (MNNNNNNNNNSNNNNNSNNNNNGNSNNN) are compositionally biased toward low complexity. Disordered regions lie at residues 1–34 (MNNNNNNNNNSNNNNNSNNNNNGNSNNNFFSGKG), 162–187 (TNISNNNKQPISSNQHPYQQKQSHHH), 440–461 (KKRKKKERKKNENIYNNRNKSS), 544–568 (VIDDNKKRNKKEKKKTIPNNDSIIN), 736–777 (NKNK…INSN), 837–979 (TKGK…NDLK), 1044–1071 (VSKSNIPSSFSSPPKETNNKNDIDKEQS), 1084–1106 (NMNNEKSKDLYFNKNDIDNNDNK), 1160–1215 (TSSG…VLER), 1257–1290 (NITANNNNDNNKNNDNDNNNNNNDNIINNNNNNG), 1651–1686 (LRSKSDTKSKEHKKKDKKYKMLFKKKEGKGKPGRKK), 1704–1731 (PRKKYERVKPRKSKNAMMNEEKSGNSEK), and 1742–1761 (IENKHKSKKGRKPKESNLNN). A compositionally biased stretch (polar residues) spans 169–182 (KQPISSNQHPYQQK). Basic residues predominate over residues 550–559 (KRNKKEKKKT). Residues 741–776 (PNNINSNDNNNKNDDNNNNNNKNVDGNNNNNNNINS) show a composition bias toward low complexity. The segment covering 838–847 (KGKKKGRKKK) has biased composition (basic residues). A compositionally biased stretch (basic and acidic residues) spans 856-873 (NIKEDIKSSKKDKKKDNI). Positions 874–924 (NDNNNDNNNDNNNDNNNDNNNDNNNDNNNDNNNNNNNNNNNNNNNNNNNHN) are enriched in low complexity. Positions 943–954 (KKKTRQYRKKSK) are enriched in basic residues. Over residues 955–966 (ITNDDNNEKIKQ) the composition is skewed to basic and acidic residues. Low complexity predominate over residues 1045-1057 (SKSNIPSSFSSPP). 3 stretches are compositionally biased toward basic and acidic residues: residues 1060–1071 (TNNKNDIDKEQS), 1088–1106 (EKSKDLYFNKNDIDNNDNK), and 1166–1192 (NKEENNKKEDDEKHFDDNTNEQKKNVD). Basic residues predominate over residues 1205 to 1215 (RKKRKKDVLER). Over residues 1261–1289 (NNNNDNNKNNDNDNNNNNNDNIINNNNNN) the composition is skewed to low complexity. Composition is skewed to basic residues over residues 1660-1686 (KEHKKKDKKYKMLFKKKEGKGKPGRKK) and 1704-1717 (PRKKYERVKPRKSK).

This is an uncharacterized protein from Plasmodium falciparum (isolate 3D7).